Here is a 240-residue protein sequence, read N- to C-terminus: Probable transcriptional regulatory protein Csal_0810 (240 aa).

The protein belongs to the TACO1 family.

The protein localises to the cytoplasm. This chain is Probable transcriptional regulatory protein Csal_0810, found in Chromohalobacter salexigens (strain ATCC BAA-138 / DSM 3043 / CIP 106854 / NCIMB 13768 / 1H11).